The following is a 1386-amino-acid chain: Roundabout homolog 3 (1386 aa).

Positions 1 to 20 are cleaved as a signal peptide; sequence MLRYLLKTLLQMNLFADSLA. Topologically, residues 21–891 are extracellular; sequence GDISNSSELL…VRLARVLREP (871 aa). N-linked (GlcNAc...) asparagine glycosylation is found at N25, N34, N41, and N53. Ig-like C2-type domains are found at residues 64-160, 166-253, 258-342, 347-440, and 450-531; these read PRIV…ASLE, DDFR…AEVM, PSFL…GSLS, PQLV…ALLE, and PPVI…GEAT. C85 and C143 form a disulfide bridge. N156 is a glycosylation site (N-linked (GlcNAc...) asparagine). 3 cysteine pairs are disulfide-bonded: C187–C236, C279–C326, and C368–C424. 3 N-linked (GlcNAc...) asparagine glycosylation sites follow: N410, N459, and N503. A disulfide bridge links C472 with C521. Disordered regions lie at residues 541 to 563 and 639 to 662; these read DWGVSPDPPTEPSSPPGAPSQPV and EPSPVSEPVRTQDSSPSRPVEDPW. The span at 546-559 shows a compositional bias: pro residues; that stretch reads PDPPTEPSSPPGAP. 3 Fibronectin type-III domains span residues 558–652, 671–766, and 771–869; these read APSQ…TQDS, VAVR…IPEE, and PPQG…SPPD. Residues N784, N813, and N820 are each glycosylated (N-linked (GlcNAc...) asparagine). A helical membrane pass occupies residues 892–912; it reads AFLAGSGAACGALLLGLCAAL. Topologically, residues 913–1386 are cytoplasmic; that stretch reads YWRRKQRKEL…PGQKRREEPR (474 aa). Disordered stretches follow at residues 965-989, 1028-1310, and 1327-1386; these read SWPHPSRSPSAQEPRGSCCPSNPDP, ELQT…AVPL, and SRPS…EEPR. Positions 1067–1083 are enriched in low complexity; it reads VKLLGKPVQMPSLNWPE. Residues 1099 to 1112 are compositionally biased toward acidic residues; sequence GPEEELEGSSEPEE. Residues 1158-1169 show a composition bias toward pro residues; it reads PSPPDPPQPPTD. 2 stretches are compositionally biased toward low complexity: residues 1178 to 1191 and 1202 to 1229; these read RRVPLGPSSPLSVS and PAGLGAGPAASPHLSPSPAPSTASSAPG. Residue S1263 is modified to Phosphoserine. The span at 1294–1304 shows a compositional bias: basic and acidic residues; sequence LERERSGERKA. Residues 1333-1344 show a composition bias toward polar residues; it reads SRGQGTSTCSTA. The segment covering 1345 to 1361 has biased composition (low complexity); that stretch reads GSNSSRGSSSSRGSRGP.

This sequence belongs to the immunoglobulin superfamily. ROBO family. As to quaternary structure, monomer. Interacts (via Fibronectin type-III 1 domain) with NELL2 (via the EGF domains) with a 3:3 stoichiometry; this interaction promotes oligomerization of ROBO3 resulting in the repulsion of commissural axons in the midline.

The protein localises to the membrane. Functionally, receptor involved in axon guidance during development. Acts as a multifunctional regulator of pathfinding that simultaneously mediates NELL2 repulsion, inhibits SLIT repulsion, and facilitates Netrin-1/NTN1 attraction. In spinal cord development plays a role in guiding commissural axons probably by preventing premature sensitivity to Slit proteins thus inhibiting Slit signaling through ROBO1/ROBO2. Binding OF NELL2 to the receptor ROBO3 promotes oligomerization of ROBO3, resulting in the repulsion of commissural axons in the midline. ROBO3 also indirectly boosts axon attraction to NTN1 without interacting with NTN1 itself. This chain is Roundabout homolog 3, found in Homo sapiens (Human).